Here is a 204-residue protein sequence, read N- to C-terminus: Leucyl/phenylalanyl-tRNA--protein transferase (204 aa).

The protein belongs to the L/F-transferase family.

The protein resides in the cytoplasm. It catalyses the reaction N-terminal L-lysyl-[protein] + L-leucyl-tRNA(Leu) = N-terminal L-leucyl-L-lysyl-[protein] + tRNA(Leu) + H(+). The catalysed reaction is N-terminal L-arginyl-[protein] + L-leucyl-tRNA(Leu) = N-terminal L-leucyl-L-arginyl-[protein] + tRNA(Leu) + H(+). It carries out the reaction L-phenylalanyl-tRNA(Phe) + an N-terminal L-alpha-aminoacyl-[protein] = an N-terminal L-phenylalanyl-L-alpha-aminoacyl-[protein] + tRNA(Phe). Its function is as follows. Functions in the N-end rule pathway of protein degradation where it conjugates Leu, Phe and, less efficiently, Met from aminoacyl-tRNAs to the N-termini of proteins containing an N-terminal arginine or lysine. The protein is Leucyl/phenylalanyl-tRNA--protein transferase of Rhizobium etli (strain CIAT 652).